We begin with the raw amino-acid sequence, 114 residues long: UPF0102 protein HP_0823 (114 aa).

Belongs to the UPF0102 family.

This Helicobacter pylori (strain ATCC 700392 / 26695) (Campylobacter pylori) protein is UPF0102 protein HP_0823.